The following is a 427-amino-acid chain: Ectonucleoside triphosphate diphosphohydrolase 5 (427 aa).

The signal sequence occupies residues 1–24; that stretch reads MATSWGAVFMLIIACVGSTVFYRE. The active-site Proton acceptor is glutamate 171. Asparagine 231 carries an N-linked (GlcNAc...) asparagine glycan. Intrachain disulfides connect cysteine 271–cysteine 302 and cysteine 362–cysteine 376.

This sequence belongs to the GDA1/CD39 NTPase family. Monomer; active form. Homodimer; disulfide-linked. Homodimers are enzymatically inactive. The cofactor is Ca(2+). Mg(2+) serves as cofactor. N-glycosylated; high-mannose type. In terms of tissue distribution, ubiquitous.

It localises to the endoplasmic reticulum. Its subcellular location is the secreted. It catalyses the reaction a ribonucleoside 5'-diphosphate + H2O = a ribonucleoside 5'-phosphate + phosphate + H(+). The catalysed reaction is GDP + H2O = GMP + phosphate + H(+). It carries out the reaction UDP + H2O = UMP + phosphate + H(+). The enzyme catalyses IDP + H2O = IMP + phosphate + H(+). It catalyses the reaction CDP + H2O = CMP + phosphate + H(+). The catalysed reaction is ADP + H2O = AMP + phosphate + H(+). It functions in the pathway protein modification; protein glycosylation. In terms of biological role, hydrolyzes nucleoside diphosphates with a preference for GDP, IDP and UDP compared to ADP and CDP. In the lumen of the endoplasmic reticulum, hydrolyzes UDP that acts as an end-product feedback inhibitor of the UDP-Glc:glycoprotein glucosyltransferases. UMP can be transported back by an UDP-sugar antiporter to the cytosol where it is consumed to regenerate UDP-glucose. Therefore, it positively regulates protein reglucosylation by clearing UDP from the ER lumen and by promoting the regeneration of UDP-glucose. Protein reglucosylation is essential to proper glycoprotein folding and quality control in the ER. The sequence is that of Ectonucleoside triphosphate diphosphohydrolase 5 (Entpd5) from Mus musculus (Mouse).